The chain runs to 630 residues: Plastin-1 (630 aa).

The tract at residues 1–114 is fimbrin headpiece; sequence MENNVTTISR…LGGTSSISTE (114 aa). 2 consecutive EF-hand domains span residues 11–46 and 51–86; these read EELEELREAFNKIDIDNSGYVSDYELQDLFKEASLP and KVREIIEKIFAVTDSNKDGKINFEEFVSLIQELKSK. Residues D24, D26, S28, Y30, E35, D64, N66, D68, K70, and E75 each contribute to the Ca(2+) site. Actin-binding regions lie at residues 108–375 and 376–624; these read TSSI…LFNT and YPAL…LMGR. The interval 115–630 is fimbrin core; sequence GTQHSYSEEE…LMGRGLNKIK (516 aa). 4 Calponin-homology (CH) domains span residues 122 to 238, 266 to 377, 396 to 505, and 517 to 626; these read EEEK…KVGL, LSPE…NTYP, SNEE…RRYT, and KVND…GRGL.

As to quaternary structure, monomer. In terms of processing, the N-terminus is blocked.

Its subcellular location is the cytoplasm. It is found in the cell projection. The protein localises to the stereocilium. Its function is as follows. Actin-bundling protein. In the inner ear, it is required for stereocilia formation. Mediates liquid packing of actin filaments that is necessary for stereocilia to grow to their proper dimensions. In Gallus gallus (Chicken), this protein is Plastin-1 (PLS1).